A 207-amino-acid polypeptide reads, in one-letter code: Holliday junction branch migration complex subunit RuvA (207 aa).

The tract at residues 1-65 is domain I; it reads MIGRIRGVIL…EDAQLLYGFN (65 aa). The domain II stretch occupies residues 66-143; the sequence is QKQERALFRE…KGLNGDLFEQ (78 aa). Residues 144–158 are flexible linker; sequence NGDIELPASASSKAP. A domain III region spans residues 159 to 207; it reads SAADIEAEASAALIALGYKPQEAAKMISRVATAGADSETLIKEALRAAI.

It belongs to the RuvA family. Homotetramer. Forms an RuvA(8)-RuvB(12)-Holliday junction (HJ) complex. HJ DNA is sandwiched between 2 RuvA tetramers; dsDNA enters through RuvA and exits via RuvB. An RuvB hexamer assembles on each DNA strand where it exits the tetramer. Each RuvB hexamer is contacted by two RuvA subunits (via domain III) on 2 adjacent RuvB subunits; this complex drives branch migration. In the full resolvosome a probable DNA-RuvA(4)-RuvB(12)-RuvC(2) complex forms which resolves the HJ.

Its subcellular location is the cytoplasm. Functionally, the RuvA-RuvB-RuvC complex processes Holliday junction (HJ) DNA during genetic recombination and DNA repair, while the RuvA-RuvB complex plays an important role in the rescue of blocked DNA replication forks via replication fork reversal (RFR). RuvA specifically binds to HJ cruciform DNA, conferring on it an open structure. The RuvB hexamer acts as an ATP-dependent pump, pulling dsDNA into and through the RuvAB complex. HJ branch migration allows RuvC to scan DNA until it finds its consensus sequence, where it cleaves and resolves the cruciform DNA. This is Holliday junction branch migration complex subunit RuvA from Proteus mirabilis (strain HI4320).